Consider the following 291-residue polypeptide: Nucleotide-binding protein lin2617 (291 aa).

13–20 (GMSGAGKT) is a binding site for ATP. Position 63-66 (63-66 (DLRG)) interacts with GTP.

This sequence belongs to the RapZ-like family.

Its function is as follows. Displays ATPase and GTPase activities. The protein is Nucleotide-binding protein lin2617 of Listeria innocua serovar 6a (strain ATCC BAA-680 / CLIP 11262).